The chain runs to 308 residues: Homoserine O-succinyltransferase (308 aa).

The active-site Acyl-thioester intermediate is the C142. K163 and S192 together coordinate substrate. Residue H235 is the Proton acceptor of the active site. E237 is an active-site residue. R249 serves as a coordination point for substrate.

The protein belongs to the MetA family.

The protein localises to the cytoplasm. It carries out the reaction L-homoserine + succinyl-CoA = O-succinyl-L-homoserine + CoA. Its pathway is amino-acid biosynthesis; L-methionine biosynthesis via de novo pathway; O-succinyl-L-homoserine from L-homoserine: step 1/1. In terms of biological role, transfers a succinyl group from succinyl-CoA to L-homoserine, forming succinyl-L-homoserine. The sequence is that of Homoserine O-succinyltransferase from Pseudoalteromonas atlantica (strain T6c / ATCC BAA-1087).